A 295-amino-acid chain; its full sequence is Septu protein PtuB (295 aa).

Functionally, component of antiviral defense system Septu type II, composed of PtuA and PtuB. Expression of Septu type II in B.subtilis (strain BEST7003) confers resistance to phages SBSphiC and SpBeta. May be a nuclease. The chain is Septu protein PtuB from Bacillus mycoides (strain KBAB4) (Bacillus weihenstephanensis).